The chain runs to 285 residues: ATP synthase gamma chain (285 aa).

Belongs to the ATPase gamma chain family. F-type ATPases have 2 components, CF(1) - the catalytic core - and CF(0) - the membrane proton channel. CF(1) has five subunits: alpha(3), beta(3), gamma(1), delta(1), epsilon(1). CF(0) has three main subunits: a, b and c.

The protein localises to the cell membrane. Its function is as follows. Produces ATP from ADP in the presence of a proton gradient across the membrane. The gamma chain is believed to be important in regulating ATPase activity and the flow of protons through the CF(0) complex. The protein is ATP synthase gamma chain of Dehalococcoides mccartyi (strain ATCC BAA-2266 / KCTC 15142 / 195) (Dehalococcoides ethenogenes (strain 195)).